Consider the following 479-residue polypeptide: Cell division protein FtsA (479 aa).

Positions 417-458 are disordered; that stretch reads QGRQTERKENEQRDNTDRQREDTPKQTVKKKEKTGPSFGDKL. The span at 420-440 shows a compositional bias: basic and acidic residues; sequence QTERKENEQRDNTDRQREDTP.

The protein belongs to the FtsA/MreB family. As to quaternary structure, self-interacts. Interacts with FtsZ.

Its subcellular location is the cell inner membrane. In terms of biological role, cell division protein that is involved in the assembly of the Z ring. May serve as a membrane anchor for the Z ring. The polypeptide is Cell division protein FtsA (Porphyromonas gingivalis (strain ATCC BAA-308 / W83)).